A 185-amino-acid chain; its full sequence is Putative manganese efflux pump MntP (185 aa).

Transmembrane regions (helical) follow at residues 4–24 (LTSS…ALAI), 36–56 (ALVI…AGWI), 65–85 (ISSY…IKMI), 105–125 (VILL…SFGV), 130–150 (VLMP…AGVF), and 165–185 (IFGG…ILPL).

It belongs to the MntP (TC 9.B.29) family.

It is found in the cell membrane. Probably functions as a manganese efflux pump. This chain is Putative manganese efflux pump MntP, found in Methanoregula boonei (strain DSM 21154 / JCM 14090 / 6A8).